The primary structure comprises 87 residues: Conotoxin Cl12.3 (87 aa).

Positions M1–L19 are cleaved as a signal peptide. The propeptide occupies I20 to R42.

It belongs to the conotoxin O1 superfamily. Post-translationally, contains 4 disulfide bonds. As to expression, expressed by the venom duct.

The protein resides in the secreted. This Californiconus californicus (California cone) protein is Conotoxin Cl12.3.